The chain runs to 417 residues: Lipoyl synthase, mitochondrial (417 aa).

Positions 35 to 56 are disordered; it reads EANPTDLAGLKRKAKRRPTKLA. A compositionally biased stretch (basic residues) spans 44 to 53; it reads LKRKAKRRPT. [4Fe-4S] cluster contacts are provided by Cys-122, Cys-127, Cys-133, Cys-152, Cys-156, Cys-159, and Ser-367. Residues 137–356 form the Radical SAM core domain; the sequence is KKSEATATIM…RDKALEMGFL (220 aa). A disordered region spans residues 389-417; sequence IEEQQHDKENNNLLLSKEDEKTTQEKANF. Residues 391–417 are compositionally biased toward basic and acidic residues; it reads EQQHDKENNNLLLSKEDEKTTQEKANF.

Belongs to the radical SAM superfamily. Lipoyl synthase family. Requires [4Fe-4S] cluster as cofactor.

It localises to the mitochondrion. It catalyses the reaction [[Fe-S] cluster scaffold protein carrying a second [4Fe-4S](2+) cluster] + N(6)-octanoyl-L-lysyl-[protein] + 2 oxidized [2Fe-2S]-[ferredoxin] + 2 S-adenosyl-L-methionine + 4 H(+) = [[Fe-S] cluster scaffold protein] + N(6)-[(R)-dihydrolipoyl]-L-lysyl-[protein] + 4 Fe(3+) + 2 hydrogen sulfide + 2 5'-deoxyadenosine + 2 L-methionine + 2 reduced [2Fe-2S]-[ferredoxin]. It functions in the pathway protein modification; protein lipoylation via endogenous pathway; protein N(6)-(lipoyl)lysine from octanoyl-[acyl-carrier-protein]: step 2/2. In terms of biological role, catalyzes the radical-mediated insertion of two sulfur atoms into the C-6 and C-8 positions of the octanoyl moiety bound to the lipoyl domains of lipoate-dependent enzymes, thereby converting the octanoylated domains into lipoylated derivatives. The polypeptide is Lipoyl synthase, mitochondrial (Komagataella phaffii (strain GS115 / ATCC 20864) (Yeast)).